Here is a 568-residue protein sequence, read N- to C-terminus: MVLDPEEKIPDDGASGDHGDSASLGAINPAYSNSSLPHSTGDSEEPFTTYFDEKIPIPEEEYSCFSFRKLWAFTGPGFLMSIAYLDPGNIESDLQSGAVAGFKLLWVLLLATIVGLLLQRLAARLGVVTGLHLAEVCHRQYPKVPRIILWLMVELAIIGSDMQEVIGSAIAINLLSAGRVPLYGGVLITIADTFVFLFLDKYGLRKLEAFFGFLITIMALTFGYEYVTVKPSQSQVLRGMFVPSCSGCHTPQVEQAVGIVGAVIMPHNMYLHSALVKSRQVNRANKQEVREANKYFFIESCIALFVSFIINVFVVSVFAEAFFEKTNEQVVEVCRNSSSPHADLFPNDNSTLAVDIYKGGVVLGCYFGPAALYIWAVGILAAGQSSTMTGTYSGQFVMEGFLNLKWSRFARVILTRSIAIIPTLLVAVFQDVEHLTGMNDFLNVLQSLQLPFALIPILTFTSLRPVMSEFSNGIGWRIAGGILVLLVCSINMYFVVVYVQELGHVALYVVAAVVSVAYLGFVFYLGWQCLIALGLSFLDCGRSYHLGLTARPEIYLLNTVDAVSLVSR.

Positions Met1–Asp20 are enriched in basic and acidic residues. The interval Met1–Glu45 is disordered. The Cytoplasmic portion of the chain corresponds to Met1–Lys69. Residues Ala30–Thr40 show a composition bias toward polar residues. Residues Leu70–Ile90 traverse the membrane as a helical segment. At Glu91–Gln95 the chain is on the extracellular side. Residues Ser96–Leu117 traverse the membrane as a helical segment. Residues Leu118 to Glu154 are Cytoplasmic-facing. Residues Leu155 to Leu175 traverse the membrane as a helical segment. Residues Ser176–Arg179 are Extracellular-facing. Residues Val180–Phe194 form a helical membrane-spanning segment. Over Val195–Glu208 the chain is Cytoplasmic. The chain crosses the membrane as a helical span at residues Ala209–Val229. Over Lys230–Gln255 the chain is Extracellular. Residues Ala256–Val276 form a helical membrane-spanning segment. The Cytoplasmic portion of the chain corresponds to Lys277 to Cys301. A helical membrane pass occupies residues Ile302–Phe322. Topologically, residues Phe323 to Gly360 are extracellular. 2 N-linked (GlcNAc...) asparagine glycosylation sites follow: Asn336 and Asn349. The helical transmembrane segment at Val361 to Ala381 threads the bilayer. Residues Ala382 to Arg408 lie on the Cytoplasmic side of the membrane. A helical membrane pass occupies residues Phe409 to Phe429. The Extracellular portion of the chain corresponds to Gln430–Asp440. Residues Phe441–Thr461 form a helical membrane-spanning segment. The Cytoplasmic segment spans residues Ser462 to Ile482. A helical membrane pass occupies residues Leu483 to Gly503. The Extracellular segment spans residues His504–Ala506. The chain crosses the membrane as a helical span at residues Leu507–Trp527. The Cytoplasmic portion of the chain corresponds to Gln528–Arg568. The required for early endosome targeting stretch occupies residues Tyr555 to Thr559. Phosphoserine occurs at positions 556, 564, and 567.

It belongs to the NRAMP family. Forms a complex with NDFIP1 and NEDD4L, in cortical neurons, in response to iron and cobalt exposure; this interaction leads to SLC11A2 ubiquitination by NEDD4L and proteasome-dependent degradation. Interacts with NDFIP1, NDFIP2 and WWP2; this interaction leads to SLC11A2 ubiquitination by WWP2 and subsequent proteasome-dependent degradation. Interacts with COX2 and TOM6 at the outer mitochondrion membrane. Interacts with ARRDC1; this interaction regulates the incorporation of SLC11A2 into extracellular vesicles through an ubiquitination-dependent mechanism. Interacts with ARRDC4; controls the incorporation of SLC11A2 into extracellular vesicles through an ubiquitination-dependent mechanism. In terms of processing, ubiquitinated by WWP2. Post-translationally, N-glycosylated. As to expression, ubiquitous. In terms of tissue distribution, expressed in proximal intestine, kidney and brain.

It localises to the golgi apparatus. Its subcellular location is the trans-Golgi network membrane. The protein resides in the early endosome membrane. It is found in the recycling endosome membrane. The protein localises to the late endosome membrane. It localises to the lysosome membrane. Its subcellular location is the apical cell membrane. The protein resides in the mitochondrion outer membrane. It is found in the extracellular vesicle membrane. It carries out the reaction Fe(2+)(in) + H(+)(in) = Fe(2+)(out) + H(+)(out). The enzyme catalyses Cd(2+)(out) + H(+)(out) = Cd(2+)(in) + H(+)(in). The catalysed reaction is Co(2+)(out) + H(+)(out) = Co(2+)(in) + H(+)(in). It catalyses the reaction Mn(2+)(in) + H(+)(in) = Mn(2+)(out) + H(+)(out). It carries out the reaction Zn(2+)(out) + H(+)(out) = Zn(2+)(in) + H(+)(in). The enzyme catalyses Ni(2+)(out) + H(+)(out) = Ni(2+)(in) + H(+)(in). The catalysed reaction is H(+)(in) = H(+)(out). It catalyses the reaction Fe(2+)(in) = Fe(2+)(out). Its activity is regulated as follows. Inhibited by 2-(3-carbamimidoylsulfanylmethyl-benzyl)-isothiourea. Proton-coupled metal ion symporter operating with a proton to metal ion stoichiometry of 1:1. Selectively transports various divalent metal cations, in decreasing affinity: Cd(2+) &gt; Fe(2+) &gt; Co(2+), Mn(2+) &gt;&gt; Zn(2+), Ni(2+), VO(2+). Essential for maintenance of iron homeostasis by modulating intestinal absorption of dietary Fe(2+) and TF-associated endosomal Fe(2+) transport in erythroid precursors and other cells. Enables Fe(2+) and Mn(2+) ion entry into mitochondria, and is thus expected to promote mitochondrial heme synthesis, iron-sulfur cluster biogenesis and antioxidant defense. Can mediate uncoupled fluxes of either protons or metal ions. In Rattus norvegicus (Rat), this protein is Natural resistance-associated macrophage protein 2 (Slc11a2).